Consider the following 175-residue polypeptide: UPF0398 protein SPH_0478 (175 aa).

This sequence belongs to the UPF0398 family.

The protein is UPF0398 protein SPH_0478 of Streptococcus pneumoniae (strain Hungary19A-6).